Here is a 603-residue protein sequence, read N- to C-terminus: ATP-dependent zinc metalloprotease FtsH (603 aa).

At 1 to 2 (MK) the chain is on the stromal side. A helical membrane pass occupies residues 3 to 23 (NLWIWSLPLIVLAFIGWQELA). The Lumenal portion of the chain corresponds to 24–101 (NQMPVATSRM…DVDVHAVSNW (78 aa)). The chain crosses the membrane as a helical span at residues 102 to 122 (INVASNWIIPLIIIGVVIWLL). The Stromal segment spans residues 123–603 (SRSASSNTTG…SQAARLTAVN (481 aa)). Residue 194 to 201 (GPPGTGKT) coordinates ATP. Histidine 415 provides a ligand contact to Zn(2+). The active site involves glutamate 416. Residues histidine 419 and aspartate 493 each contribute to the Zn(2+) site.

It in the central section; belongs to the AAA ATPase family. In the C-terminal section; belongs to the peptidase M41 family. In terms of assembly, homohexamer. The cofactor is Zn(2+).

The protein resides in the plastid. The protein localises to the chloroplast thylakoid membrane. Functionally, acts as a processive, ATP-dependent zinc metallopeptidase. In Cyanidioschyzon merolae (strain NIES-3377 / 10D) (Unicellular red alga), this protein is ATP-dependent zinc metalloprotease FtsH.